Here is a 312-residue protein sequence, read N- to C-terminus: Ribonuclease HIII (312 aa).

The RNase H type-2 domain maps to 95 to 311; the sequence is FNCIGSDEAG…REKAQKILKP (217 aa). The a divalent metal cation site is built by D101, E102, and D206.

This sequence belongs to the RNase HII family. RnhC subfamily. It depends on Mn(2+) as a cofactor. Requires Mg(2+) as cofactor.

The protein localises to the cytoplasm. The enzyme catalyses Endonucleolytic cleavage to 5'-phosphomonoester.. Endonuclease that specifically degrades the RNA of RNA-DNA hybrids. The sequence is that of Ribonuclease HIII from Staphylococcus aureus (strain MSSA476).